The sequence spans 403 residues: Argininosuccinate synthase (403 aa).

Residues 13 to 21 and A40 each bind ATP; that span reads AYSGGLDTS. Positions 91 and 96 each coordinate L-citrulline. An ATP-binding site is contributed by G121. 3 residues coordinate L-aspartate: T123, N127, and D128. N127 is an L-citrulline binding site. The L-citrulline site is built by R131, S180, S189, E265, and Y277.

It belongs to the argininosuccinate synthase family. Type 1 subfamily. As to quaternary structure, homotetramer.

The protein resides in the cytoplasm. The enzyme catalyses L-citrulline + L-aspartate + ATP = 2-(N(omega)-L-arginino)succinate + AMP + diphosphate + H(+). It participates in amino-acid biosynthesis; L-arginine biosynthesis; L-arginine from L-ornithine and carbamoyl phosphate: step 2/3. This chain is Argininosuccinate synthase, found in Leptospira interrogans serogroup Icterohaemorrhagiae serovar Lai (strain 56601).